The chain runs to 375 residues: Alpha-2,8-sialyltransferase 8B (375 aa).

Residues 1-6 lie on the Cytoplasmic side of the membrane; that stretch reads MQLQFR. The chain crosses the membrane as a helical; Signal-anchor for type II membrane protein span at residues 7–23; the sequence is SWMLAALTLLVVFLIFA. Over 24-375 the chain is Lumenal; the sequence is DISEIEEEIG…LTVGQCDGAT (352 aa). 4 N-linked (GlcNAc...) asparagine glycosylation sites follow: asparagine 60, asparagine 72, asparagine 89, and asparagine 134. Disulfide bonds link cysteine 157–cysteine 307 and cysteine 171–cysteine 371. Residues asparagine 162 and asparagine 185 each contribute to the CMP-N-acetyl-beta-neuraminate site. 2 N-linked (GlcNAc...) asparagine glycosylation sites follow: asparagine 219 and asparagine 234. CMP-N-acetyl-beta-neuraminate contacts are provided by threonine 294, threonine 295, glycine 296, tryptophan 316, tyrosine 329, and histidine 330. Catalysis depends on histidine 346, which acts as the Proton donor/acceptor.

It belongs to the glycosyltransferase 29 family. In terms of processing, autopolysialylated. Autopolysialylation is not a prerequisite for the polysialylation acitity, but enhances the polysialylation acitity.

The protein localises to the golgi apparatus membrane. Its subcellular location is the secreted. It localises to the cell membrane. It carries out the reaction [N-acetyl-alpha-D-neuraminosyl-(2-&gt;8)](n) + CMP-N-acetyl-beta-neuraminate = [N-acetyl-alpha-D-neuraminosyl-(2-&gt;8)](n+1) + CMP + H(+). The protein operates within protein modification; protein glycosylation. Functionally, catalyzes the transfer of a sialic acid from a CMP-linked sialic acid donor onto a terminal alpha-2,3-, alpha-2,6-, or alpha-2,8-linked sialic acid of an N-linked glycan acceptor through alpha-2,8-linkages. Therefore, participates in polysialic acid synthesis on various sialylated N-acetyllactosaminyl oligosaccharides (alpha-2,3-, alpha-2,6-, or alpha-2,8-linked sialic acid), including NCAM1, NCAM1 N-glycans, FETUB N-glycans, and to a lesser extent sialylparagloboside (SPG) and AHSG, which does not require the initial addition of an alpha 2,8-sialic acid. However, does not exhibit sialic acid-polymerase activity. Catalyzes polysialic acid synthesis in the hippocampal on NCAM1 and supports neurite outgrowth. ST8SIA2-mediated polysialylation influences on oligodendrocyte differentiation and may promote the integrity of myelin and axons. In Pan troglodytes (Chimpanzee), this protein is Alpha-2,8-sialyltransferase 8B.